We begin with the raw amino-acid sequence, 696 residues long: DNA-directed RNA polymerase subunit beta' (696 aa).

Positions 69, 71, 87, and 90 each coordinate Zn(2+). Residues Asp-504, Asp-506, and Asp-508 each contribute to the Mg(2+) site.

The protein belongs to the RNA polymerase beta' chain family. RpoC1 subfamily. As to quaternary structure, in plastids the minimal PEP RNA polymerase catalytic core is composed of four subunits: alpha, beta, beta', and beta''. When a (nuclear-encoded) sigma factor is associated with the core the holoenzyme is formed, which can initiate transcription. It depends on Mg(2+) as a cofactor. Zn(2+) serves as cofactor.

Its subcellular location is the plastid. It is found in the chloroplast. It carries out the reaction RNA(n) + a ribonucleoside 5'-triphosphate = RNA(n+1) + diphosphate. Functionally, DNA-dependent RNA polymerase catalyzes the transcription of DNA into RNA using the four ribonucleoside triphosphates as substrates. The polypeptide is DNA-directed RNA polymerase subunit beta' (Pinus koraiensis (Korean pine)).